The sequence spans 317 residues: Melanocyte-stimulating hormone receptor (317 aa).

Residues 1-37 lie on the Extracellular side of the membrane; that stretch reads MPVLGSQRRLLGSLNCTPPATLPLTLAPNRTGPQCLE. A glycan (N-linked (GlcNAc...) asparagine) is linked at Asn-29. The chain crosses the membrane as a helical span at residues 38 to 63; sequence VSIPDGLFLSLGLVSLVENVLVVAAI. Residues 64–72 are Cytoplasmic-facing; sequence AKNRNLHSP. Residues 73 to 93 traverse the membrane as a helical segment; the sequence is MYYFICCLAMSDLLVSVSNVL. Residues 94–118 lie on the Extracellular side of the membrane; sequence ETAVMLLLEAGVLATRAAVVQQLDN. The helical transmembrane segment at 119 to 140 threads the bilayer; sequence VIDVLICSSMVSSLCFLGAIAV. Over 141-163 the chain is Cytoplasmic; it reads DRYISIFYALRYHSVVTLPRAWR. The chain crosses the membrane as a helical span at residues 164-183; the sequence is IIAAIWVASILTSVLSITYY. Residues 184–191 are Extracellular-facing; sequence NHTVVLLC. A helical transmembrane segment spans residues 192–211; the sequence is LVGFFIAMLALMAVLYVHML. Residues 212–240 lie on the Cytoplasmic side of the membrane; sequence ARACQHARGIARLQKRQRPIHQGFGLKGA. The helical transmembrane segment at 241-266 threads the bilayer; the sequence is ATLTILLGVFFLCWGPFFLHLSLIVL. The Extracellular portion of the chain corresponds to 267-279; that stretch reads CPQHPTCGCIFKN. Residues 280-300 traverse the membrane as a helical segment; the sequence is FNLFLALIICNAIVDPLIYAF. Residues 301–317 lie on the Cytoplasmic side of the membrane; it reads RSQELRKTLQEVLQCSW. Cys-315 carries S-palmitoyl cysteine lipidation.

This sequence belongs to the G-protein coupled receptor 1 family. Interacts with MGRN1, but does not undergo MGRN1-mediated ubiquitination; this interaction competes with GNAS-binding and thus inhibits agonist-induced cAMP production. Interacts with OPN3; the interaction results in a decrease in MC1R-mediated cAMP signaling and ultimately a decrease in melanin production in melanocytes.

The protein localises to the cell membrane. In terms of biological role, receptor for MSH (alpha, beta and gamma) and ACTH. The activity of this receptor is mediated by G proteins which activate adenylate cyclase. Mediates melanogenesis, the production of eumelanin (black/brown) and phaeomelanin (red/yellow), via regulation of cAMP signaling in melanocytes. The sequence is that of Melanocyte-stimulating hormone receptor (MC1R) from Ovis aries (Sheep).